Here is a 41-residue protein sequence, read N- to C-terminus: Large ribosomal subunit protein bL36 (41 aa).

The protein belongs to the bacterial ribosomal protein bL36 family.

The chain is Large ribosomal subunit protein bL36 from Dinoroseobacter shibae (strain DSM 16493 / NCIMB 14021 / DFL 12).